Reading from the N-terminus, the 311-residue chain is MKNDERTPLPDALAQPLERFYAYLHTEKGLSLYTQRNYKQQLETMTQYLVQVGLTHWTQLDSAWVRQLVMQGKRQGMKASSIATRLSSLRSFLDFLILRGELQANPAKGVSAPRKQRTLPKNLDVDEMAQLLEVTDDDPLSIRDRAIMELMYGAGLRLAELVSIDIKDVNLSEGEIRVIGKGNKERKVWFAGQAQEWVGKWLKLRSQLADSAETALFVSKLGTRISHRSVQKRMAEWGQKQAVASHISPHKLRHSFATHMLESSNNLRAVQELLGHENIATTQIYTHLDFQHLAQVYDQAHPRARKKNKDD.

Positions 11–97 constitute a Core-binding (CB) domain; the sequence is DALAQPLERF…SLRSFLDFLI (87 aa). Residues 118 to 298 enclose the Tyr recombinase domain; it reads TLPKNLDVDE…DFQHLAQVYD (181 aa). Active-site residues include Arg-157, Lys-181, His-250, Arg-253, and His-276. Catalysis depends on Tyr-285, which acts as the O-(3'-phospho-DNA)-tyrosine intermediate.

Belongs to the 'phage' integrase family. XerC subfamily. In terms of assembly, forms a cyclic heterotetrameric complex composed of two molecules of XerC and two molecules of XerD.

The protein localises to the cytoplasm. Site-specific tyrosine recombinase, which acts by catalyzing the cutting and rejoining of the recombining DNA molecules. The XerC-XerD complex is essential to convert dimers of the bacterial chromosome into monomers to permit their segregation at cell division. It also contributes to the segregational stability of plasmids. The polypeptide is Tyrosine recombinase XerC (Vibrio cholerae serotype O1 (strain ATCC 39541 / Classical Ogawa 395 / O395)).